Consider the following 156-residue polypeptide: Small ribosomal subunit protein uS7 (156 aa).

Belongs to the universal ribosomal protein uS7 family. In terms of assembly, part of the 30S ribosomal subunit. Contacts proteins S9 and S11.

One of the primary rRNA binding proteins, it binds directly to 16S rRNA where it nucleates assembly of the head domain of the 30S subunit. Is located at the subunit interface close to the decoding center, probably blocks exit of the E-site tRNA. The protein is Small ribosomal subunit protein uS7 of Thermodesulfovibrio yellowstonii (strain ATCC 51303 / DSM 11347 / YP87).